The following is a 171-amino-acid chain: Large ribosomal subunit protein uL15 (171 aa).

Residues 1–10 (MKLNEISDNN) are compositionally biased toward polar residues. 2 disordered regions span residues 1-44 (MKLN…RSGV) and 150-171 (LPEA…NKAK). Gly residues predominate over residues 21–35 (RGIGSGKGKTAGRGQ). The segment covering 157 to 171 (EQEKKAARREANKAK) has biased composition (basic and acidic residues).

This sequence belongs to the universal ribosomal protein uL15 family. In terms of assembly, part of the 50S ribosomal subunit.

In terms of biological role, binds to the 23S rRNA. This Novosphingobium aromaticivorans (strain ATCC 700278 / DSM 12444 / CCUG 56034 / CIP 105152 / NBRC 16084 / F199) protein is Large ribosomal subunit protein uL15.